A 260-amino-acid polypeptide reads, in one-letter code: Phosphonates import ATP-binding protein PhnC 2 (260 aa).

The region spanning I4–R245 is the ABC transporter domain. G37–S44 serves as a coordination point for ATP.

It belongs to the ABC transporter superfamily. Phosphonates importer (TC 3.A.1.9.1) family. As to quaternary structure, the complex is composed of two ATP-binding proteins (PhnC), two transmembrane proteins (PhnE) and a solute-binding protein (PhnD).

The protein localises to the cell inner membrane. The catalysed reaction is phosphonate(out) + ATP + H2O = phosphonate(in) + ADP + phosphate + H(+). Its function is as follows. Part of the ABC transporter complex PhnCDE involved in phosphonates import. Responsible for energy coupling to the transport system. The protein is Phosphonates import ATP-binding protein PhnC 2 of Trichodesmium erythraeum (strain IMS101).